The primary structure comprises 843 residues: Transmembrane protease serine 7 (843 aa).

Over 1–76 (MDKENSDVSA…KVPFWNVQNK (76 aa)) the chain is Cytoplasmic. The segment at 27–67 (AQKKLPVRRPPLPGRRLPLPGRRPPQRPIGKAKPKKQSKKK) is disordered. Positions 56–67 (GKAKPKKQSKKK) are enriched in basic residues. Residues 77–97 (IILFTVFLFILAVIAWTLLWL) form a helical; Signal-anchor for type II membrane protein membrane-spanning segment. Residues 98-843 (YISKTESKDA…WIHKYVPSLL (746 aa)) lie on the Extracellular side of the membrane. The SEA domain maps to 106–234 (DAFYFAGMFR…DSVVLNAGLR (129 aa)). Cystine bridges form between Cys-247/Cys-273, Cys-299/Cys-322, Cys-365/Cys-396, Cys-484/Cys-496, Cys-491/Cys-509, Cys-503/Cys-518, Cys-525/Cys-544, Cys-538/Cys-553, Cys-559/Cys-571, Cys-566/Cys-585, Cys-579/Cys-594, and Cys-631/Cys-647. CUB domains lie at 247–360 (CSQY…FEVI) and 365–481 (CENT…YNIS). LDL-receptor class A domains are found at residues 483-519 (PCPVGSFRCSSGLCVPQAQRCDGVNDCFDESDELFCV), 517-554 (FCVSPQPACNTSSFRQHGPLICDGFRDCENGRDEQNCT), and 558-595 (PCNNRTFKCGNDICFRKQNAKCDGTVDCPDGSDEEGCT). Residues 606–840 (IIGGTDTLEG…FVPWIHKYVP (235 aa)) form the Peptidase S1 domain. Residues His-646 and Asp-694 each act as charge relay system in the active site. Disulfide bonds link Cys-730-Cys-796 and Cys-762-Cys-775. Residue Ser-790 is the Charge relay system of the active site.

It belongs to the peptidase S1 family. As to quaternary structure, forms a heterodimer with SERPINA5. In terms of processing, N-glycosylated. In terms of tissue distribution, expressed in brain, ovary, testis, salivary gland, trachea and lung.

It is found in the cell membrane. In terms of biological role, serine protease which preferentially hydrolyzes peptides with Arg at the P1 position. This is Transmembrane protease serine 7 (TMPRSS7) from Homo sapiens (Human).